Here is a 434-residue protein sequence, read N- to C-terminus: Gamma-enolase (434 aa).

At Ser-2 the chain carries N-acetylserine. An N6-acetyllysine modification is found at Lys-5. Position 26 is a phosphothreonine (Thr-26). Ser-40 is a binding site for Mg(2+). At Tyr-44 the chain carries Phosphotyrosine. Lys-60 is subject to N6-acetyllysine; alternate. Position 60 is an N6-succinyllysine; alternate (Lys-60). The residue at position 64 (Lys-64) is an N6-acetyllysine. The residue at position 89 (Lys-89) is an N6-acetyllysine; alternate. N6-succinyllysine; alternate is present on Lys-89. Substrate contacts are provided by His-158 and Glu-167. Residues Lys-193, Lys-197, and Lys-199 each carry the N6-acetyllysine modification. An N6-acetyllysine; alternate modification is found at Lys-202. Residue Lys-202 forms a Glycyl lysine isopeptide (Lys-Gly) (interchain with G-Cter in SUMO2); alternate linkage. Residue Glu-210 is the Proton donor of the active site. An N6-acetyllysine; alternate mark is found at Lys-228 and Lys-233. The residue at position 228 (Lys-228) is an N6-succinyllysine; alternate. Lys-233 carries the post-translational modification N6-(2-hydroxyisobutyryl)lysine; alternate. Residue Asp-245 coordinates Mg(2+). Lys-256 carries the N6-acetyllysine modification. Ser-263 carries the post-translational modification Phosphoserine. A Phosphotyrosine modification is found at Tyr-287. Phosphoserine is present on Ser-291. Residues Glu-293 and Asp-318 each coordinate Mg(2+). Residues Glu-293 and Asp-318 each contribute to the substrate site. N6-acetyllysine is present on residues Lys-335 and Lys-343. Lys-343 (proton acceptor) is an active-site residue. Residues 370–373 (SHRS) and Lys-394 contribute to the substrate site. An N6-acetyllysine modification is found at Lys-406.

This sequence belongs to the enolase family. As to quaternary structure, mammalian enolase is composed of 3 isozyme subunits, alpha, beta and gamma, which can form homodimers or heterodimers which are cell-type and development-specific. It depends on Mg(2+) as a cofactor. In terms of tissue distribution, the alpha/alpha homodimer is expressed in embryo and in most adult tissues. The alpha/beta heterodimer and the beta/beta homodimer are found in striated muscle, and the alpha/gamma heterodimer and the gamma/gamma homodimer in neurons.

It is found in the cytoplasm. The protein resides in the cell membrane. The catalysed reaction is (2R)-2-phosphoglycerate = phosphoenolpyruvate + H2O. It participates in carbohydrate degradation; glycolysis; pyruvate from D-glyceraldehyde 3-phosphate: step 4/5. Its function is as follows. Has neurotrophic and neuroprotective properties on a broad spectrum of central nervous system (CNS) neurons. Binds, in a calcium-dependent manner, to cultured neocortical neurons and promotes cell survival. The protein is Gamma-enolase (ENO2) of Homo sapiens (Human).